Here is a 941-residue protein sequence, read N- to C-terminus: MDNKLNHNDDNTLIQTEDVIGIDLGTRFSCVSIWRNKRFEIIPDQFGNRTIPSVVSFYKSAKLVGHNALCMKDANPKNTIYDIKRIIGRRMNDKSIEQTKNLISYELVSDESKHENILVQLDKSDYTLTHKYQYKPEEICAQILIEIRRIASQYLQKPINKAVITVPAYFNDAQRQATLDSAKIAGLDVLKIINEPTAAALAYGLGSEKWNKKTGGNVIVYDLGAGTLDVSLMNISNGVFRTLAVGGNTHLGGEDFDYLIMNHILIDFRKKHRIKELQMSKLSQLKLKNSVENAKKLLSTVDKAVVCVDDFYNGKQLYFNLTREFMEMVCNELFIMCMKPLKDVLDSSGLTRQDIDKVILVGGSTRIPKIQKLILDFFKNTQINALTMSLNPDEVVSAGASIYGYIITNKGDPFSDNLVLLDITPLSLGVETLQKQMTVIIPRNTVIPTKKTKIFSTDTDDQDNVNIKIFEGERKLTKNNFHVGTFNLSGFEKGPRGYPVIKITFHIDINGILQVTAHEKKSDIQNGIKITSTWGAKGRLSKSDIETIIKEAEQNEEIDKLYSHKIGLVHRINSVCNAITINLKDNEITLTNADKKKIKADIKSNLKWLQNKDINDLEVTELEKRENRLNKLYAPLIIQIGKKSDFKDYNKDTTTAEIHGDDNENDGGIYERIVLESDPSDYEKEEIKALTATIQDLCKNIINVVNNPISKFSREDIDLVTDYMETIQIWTYTTTATSTIEFIAKINEINKFTEDIMKKYEDTKIFEKNDSFTYKDELQLTCLTLNECIKSNYFSVKKSEIDILSKTIKDTMFWLLGHQNEDNSVYKEKLDQVISICNSVYHGMHRIKELENQPDIPEDSEDSESEDDTTTSKDSESSEITENLALPTNKIRENTSELLKRLPDKIKSSTQNKNDVLLKIDLNKLNPNTDIKYKNIDNHYR.

Residues 851–887 form a disordered region; sequence ENQPDIPEDSEDSESEDDTTTSKDSESSEITENLALP. The segment covering 856–869 has biased composition (acidic residues); the sequence is IPEDSEDSESEDDT.

It belongs to the heat shock protein 70 family.

Functionally, probable chaperone. The protein is Heat shock protein 70 homolog of Acanthamoeba polyphaga (Amoeba).